Consider the following 134-residue polypeptide: Small ribosomal subunit protein bS6 (134 aa).

The protein belongs to the bacterial ribosomal protein bS6 family.

Binds together with bS18 to 16S ribosomal RNA. The polypeptide is Small ribosomal subunit protein bS6 (Pelodictyon phaeoclathratiforme (strain DSM 5477 / BU-1)).